The chain runs to 318 residues: 2-oxoacid:ferredoxin oxidoreductase 1, subunit beta (318 aa).

The [4Fe-4S] cluster site is built by C18, C21, and C52. Thiamine diphosphate-binding positions include 50–53 (IGCS) and H69. D94 serves as a coordination point for Mg(2+). A thiamine diphosphate-binding site is contributed by 95 to 96 (GD). The Mg(2+) site is built by N122 and V124. Position 126–127 (126–127 (GL)) interacts with thiamine diphosphate. Residue C201 participates in [4Fe-4S] cluster binding.

As to quaternary structure, heterodimer composed of an alpha and a beta subunit. It depends on [4Fe-4S] cluster as a cofactor. The cofactor is thiamine diphosphate. Mg(2+) is required as a cofactor.

The catalysed reaction is a 2-oxocarboxylate + 2 oxidized [2Fe-2S]-[ferredoxin] + CoA = an acyl-CoA + 2 reduced [2Fe-2S]-[ferredoxin] + CO2 + H(+). Its function is as follows. Catalyzes the coenzyme A-dependent oxidative decarboxylation of different 2-oxoacids such as pyruvate, 2-oxobutyrate and glyoxylate to form their CoA derivatives. The polypeptide is 2-oxoacid:ferredoxin oxidoreductase 1, subunit beta (Aeropyrum pernix (strain ATCC 700893 / DSM 11879 / JCM 9820 / NBRC 100138 / K1)).